The following is a 509-amino-acid chain: L-aspartate oxidase (509 aa).

Residues 14–17 (SGIA), 45–52 (STDWAQGG), and aspartate 214 each bind FAD. The active-site Proton donor/acceptor is the arginine 279. Residues glutamate 358 and 374–375 (SL) contribute to the FAD site. 2 disordered regions span residues 389-412 (AAGD…PDLP) and 486-509 (NPES…DAGH). The span at 402–412 (PELRDRDPDLP) shows a compositional bias: basic and acidic residues. Residues 499–509 (AAAEEAPDAGH) show a composition bias toward acidic residues.

This sequence belongs to the FAD-dependent oxidoreductase 2 family. NadB subfamily. Requires FAD as cofactor.

It is found in the cytoplasm. The catalysed reaction is L-aspartate + O2 = iminosuccinate + H2O2. It participates in cofactor biosynthesis; NAD(+) biosynthesis; iminoaspartate from L-aspartate (oxidase route): step 1/1. Functionally, catalyzes the oxidation of L-aspartate to iminoaspartate, the first step in the de novo biosynthesis of NAD(+). This is L-aspartate oxidase (nadB) from Halobacterium salinarum (strain ATCC 700922 / JCM 11081 / NRC-1) (Halobacterium halobium).